Reading from the N-terminus, the 377-residue chain is Chaperone protein DnaJ (377 aa).

The J domain maps to 5–70 (DYYQVLGVSR…KKRSAYDQLG (66 aa)). The CR-type zinc finger occupies 138-216 (GVTKIISFKT…CYGEGRYINT (79 aa)). Residues C151, C154, C168, C171, C190, C193, C204, and C207 each contribute to the Zn(2+) site. 4 CXXCXGXG motif repeats span residues 151-158 (CEACTGKG), 168-175 (CPTCRGSG), 190-197 (CQTCRGAG), and 204-211 (CTKCYGEG).

Belongs to the DnaJ family. Homodimer. It depends on Zn(2+) as a cofactor.

The protein resides in the cytoplasm. Functionally, participates actively in the response to hyperosmotic and heat shock by preventing the aggregation of stress-denatured proteins and by disaggregating proteins, also in an autonomous, DnaK-independent fashion. Unfolded proteins bind initially to DnaJ; upon interaction with the DnaJ-bound protein, DnaK hydrolyzes its bound ATP, resulting in the formation of a stable complex. GrpE releases ADP from DnaK; ATP binding to DnaK triggers the release of the substrate protein, thus completing the reaction cycle. Several rounds of ATP-dependent interactions between DnaJ, DnaK and GrpE are required for fully efficient folding. Also involved, together with DnaK and GrpE, in the DNA replication of plasmids through activation of initiation proteins. This Orientia tsutsugamushi (strain Ikeda) (Rickettsia tsutsugamushi) protein is Chaperone protein DnaJ.